A 202-amino-acid polypeptide reads, in one-letter code: Probable chemoreceptor glutamine deamidase CheD 2 (202 aa).

This sequence belongs to the CheD family.

The enzyme catalyses L-glutaminyl-[protein] + H2O = L-glutamyl-[protein] + NH4(+). In terms of biological role, probably deamidates glutamine residues to glutamate on methyl-accepting chemotaxis receptors (MCPs), playing an important role in chemotaxis. The chain is Probable chemoreceptor glutamine deamidase CheD 2 from Shewanella oneidensis (strain ATCC 700550 / JCM 31522 / CIP 106686 / LMG 19005 / NCIMB 14063 / MR-1).